Consider the following 1088-residue polypeptide: DEAD-box ATP-dependent RNA helicase 40 (1088 aa).

3 disordered regions span residues 1–28 (MATT…PWKG), 47–178 (TQYE…QYAH), and 192–254 (TQGL…QNTH). Ala2 carries the post-translational modification N-acetylalanine. The WW domain maps to 20 to 54 (PTLPQPWKGLIDGSTGILYYWNPETNVTQYERPSA). Composition is skewed to low complexity over residues 87–137 (VGHV…SQSM), 148–171 (QTYQ…MPQQ), and 200–215 (QTPQ…PSQQ). Residues 222–231 (PKREGDEFHG) are compositionally biased toward basic and acidic residues. Residues 236-254 (GFSQPHLPNSERSPSQNTH) are compositionally biased toward polar residues. A Q motif motif is present at residues 435-463 (ITFESSGLPPEILRELLSAGFPSPTPIQA). The Helicase ATP-binding domain occupies 466 to 640 (WPIALQSRDI…SDLLVNPVQV (175 aa)). Residue 479–486 (AKTGSGKT) coordinates ATP. The DEAD box motif lies at 588–591 (DEAD). The Helicase C-terminal domain maps to 669 to 813 (RLEQILRSQE…QVPPQVRDIA (145 aa)). Composition is skewed to gly residues over residues 861-885 (EGGF…GGRF), 893-902 (GRGGNRGRGF), 911-920 (NVGGRGGFGR), and 932-944 (FGRG…GRGV). A disordered region spans residues 861–1033 (EGGFGGREGG…RRDRAPRVSG (173 aa)). Residues 945–963 (GRFDNRRGRSRSRSPDLVR) show a composition bias toward basic and acidic residues. A compositionally biased stretch (low complexity) spans 969 to 983 (SSYSRSRSRSGSYSR). Positions 984 to 1013 (SRSRSRSWSRSRSRSPRHSRDRGGHNRSRS) are enriched in basic residues.

Belongs to the DEAD box helicase family. DDX5/DBP2 subfamily.

It localises to the nucleus. It carries out the reaction ATP + H2O = ADP + phosphate + H(+). ATP-dependent RNA helicase involved nonsense-mediated mRNA decay and ribosome biogenesis through rRNA processing. This is DEAD-box ATP-dependent RNA helicase 40 (RH40) from Arabidopsis thaliana (Mouse-ear cress).